The sequence spans 476 residues: Cys-Gly metallodipeptidase dug1 (476 aa).

H99 is a binding site for Zn(2+). Residue D101 is part of the active site. Zn(2+) is bound at residue D133. The active-site Proton acceptor is E167. Residues E168, D196, and H446 each coordinate Zn(2+).

Belongs to the peptidase M20A family. In terms of assembly, homodimer. Component of the GSH degradosomal complex. The cofactor is Zn(2+). Mn(2+) serves as cofactor.

The protein localises to the cytoplasm. Catalytic component of the GSH degradosomal complex involved in the degradation of glutathione (GSH) and other peptides containing a gamma-glu-X bond. Has a Gly-Cys dipeptidase activity. The chain is Cys-Gly metallodipeptidase dug1 (dug1) from Schizosaccharomyces pombe (strain 972 / ATCC 24843) (Fission yeast).